The chain runs to 850 residues: PH domain-containing protein YHR131C (850 aa).

A PH domain is found at 194-306 (RIHSDLVHRS…MYLSIGISVS (113 aa)). Positions 324–338 (RRRRRRRRRRRRHTH) are enriched in basic residues. Disordered stretches follow at residues 324 to 348 (RRRR…GSFS), 406 to 428 (SAAS…SGCS), 451 to 494 (SSRT…GVPV), 583 to 659 (EASI…TDDS), and 793 to 850 (TTKD…QITA). The segment covering 406–416 (SAASGESSDNS) has biased composition (low complexity). The span at 417–428 (TLGSTRSLSGCS) shows a compositional bias: polar residues. Positions 479–489 (HHESSGGDHPE) are enriched in basic and acidic residues. Over residues 605–619 (ESATDLSQSSRSLCL) the composition is skewed to polar residues. 2 stretches are compositionally biased toward acidic residues: residues 626–658 (INDD…DTDD) and 799–850 (DHGE…QITA).

The protein localises to the cytoplasm. In Saccharomyces cerevisiae (strain ATCC 204508 / S288c) (Baker's yeast), this protein is PH domain-containing protein YHR131C.